The sequence spans 156 residues: Large ribosomal subunit protein bL9 (156 aa).

It belongs to the bacterial ribosomal protein bL9 family.

Its function is as follows. Binds to the 23S rRNA. In Treponema pallidum (strain Nichols), this protein is Large ribosomal subunit protein bL9.